The sequence spans 95 residues: Co-chaperonin GroES (95 aa).

This sequence belongs to the GroES chaperonin family. In terms of assembly, heptamer of 7 subunits arranged in a ring. Interacts with the chaperonin GroEL.

It is found in the cytoplasm. Functionally, together with the chaperonin GroEL, plays an essential role in assisting protein folding. The GroEL-GroES system forms a nano-cage that allows encapsulation of the non-native substrate proteins and provides a physical environment optimized to promote and accelerate protein folding. GroES binds to the apical surface of the GroEL ring, thereby capping the opening of the GroEL channel. This chain is Co-chaperonin GroES, found in Marinobacter nauticus (strain ATCC 700491 / DSM 11845 / VT8) (Marinobacter aquaeolei).